A 551-amino-acid chain; its full sequence is E3 ubiquitin-protein ligase TRIM8 (551 aa).

The RING-type zinc-finger motif lies at 15–56 (CPICLHVFVEPVQLPCKHNFCRGCIGEAWAKDSGLVRCPECN). B box-type zinc fingers lie at residues 92–132 (CVFC…ARGH) and 140–182 (VRAW…VCDV). The stretch at 181–249 (DVEIRRNEIR…HQLLDEDLRQ (69 aa)) forms a coiled coil.

The protein belongs to the TRIM/RBCC family. As to quaternary structure, homodimer. Interacts with SOCS1 (via) SH2 domain and SOCS box. Interacts with HSP90AB1; prevents nucleus translocation of phosphorylated STAT3 and HSP90AB1. Interacts with MAP3K7/TAK1. Interacts with PIAS3. Interacts with TICAM1. Interacts with TRIM15; this interaction prevents TRIM8 cytoplasmic translocation. As to expression, widely expressed. Expressed in glomerular podocytes of kidneys.

The protein resides in the cytoplasm. It localises to the nucleus. Its subcellular location is the nuclear body. The enzyme catalyses S-ubiquitinyl-[E2 ubiquitin-conjugating enzyme]-L-cysteine + [acceptor protein]-L-lysine = [E2 ubiquitin-conjugating enzyme]-L-cysteine + N(6)-ubiquitinyl-[acceptor protein]-L-lysine.. It functions in the pathway protein modification; protein ubiquitination. In terms of biological role, E3 ubiquitin-protein ligase that participates in multiple biological processes including cell survival, differentiation, apoptosis, and in particular, the innate immune response. Participates in the activation of interferon-gamma signaling by promoting proteasomal degradation of the repressor SOCS1. Plays a positive role in the TNFalpha and IL-1beta signaling pathways. Mechanistically, induces the 'Lys-63'-linked polyubiquitination of MAP3K7/TAK1 component leading to the activation of NF-kappa-B. Also modulates STAT3 activity through negative regulation of PIAS3, either by degradation of PIAS3 through the ubiquitin-proteasome pathway or exclusion of PIAS3 from the nucleus. Negatively regulates TLR3/4-mediated innate immune response by catalyzing 'Lys-6'- and 'Lys-33'-linked polyubiquitination of TICAM1 and thereby disrupting the TICAM1-TBK1 interaction. The polypeptide is E3 ubiquitin-protein ligase TRIM8 (TRIM8) (Homo sapiens (Human)).